The primary structure comprises 423 residues: Gamma-glutamyl phosphate reductase (423 aa).

It belongs to the gamma-glutamyl phosphate reductase family.

Its subcellular location is the cytoplasm. It catalyses the reaction L-glutamate 5-semialdehyde + phosphate + NADP(+) = L-glutamyl 5-phosphate + NADPH + H(+). It functions in the pathway amino-acid biosynthesis; L-proline biosynthesis; L-glutamate 5-semialdehyde from L-glutamate: step 2/2. In terms of biological role, catalyzes the NADPH-dependent reduction of L-glutamate 5-phosphate into L-glutamate 5-semialdehyde and phosphate. The product spontaneously undergoes cyclization to form 1-pyrroline-5-carboxylate. This is Gamma-glutamyl phosphate reductase from Brucella suis (strain ATCC 23445 / NCTC 10510).